The following is a 474-amino-acid chain: Cysteine--tRNA ligase (474 aa).

C29 contributes to the Zn(2+) binding site. The 'HIGH' region signature appears at 31-41; it reads ATVQGEPHVGH. Zn(2+)-binding residues include C211, H236, and E240. The 'KMSKS' region signature appears at 267-271; it reads KMSKS. K270 contacts ATP.

It belongs to the class-I aminoacyl-tRNA synthetase family. Monomer. Zn(2+) is required as a cofactor.

The protein localises to the cytoplasm. The enzyme catalyses tRNA(Cys) + L-cysteine + ATP = L-cysteinyl-tRNA(Cys) + AMP + diphosphate. The chain is Cysteine--tRNA ligase from Beutenbergia cavernae (strain ATCC BAA-8 / DSM 12333 / CCUG 43141 / JCM 11478 / NBRC 16432 / NCIMB 13614 / HKI 0122).